An 850-amino-acid chain; its full sequence is Rho guanine nucleotide exchange factor 33 (850 aa).

2 stretches are compositionally biased toward basic and acidic residues: residues methionine 1–histidine 13 and glutamate 98–arginine 113. Disordered regions lie at residues methionine 1–threonine 21 and glutamate 98–leucine 209. Residues leucine 54–histidine 128 are a coiled coil. The segment covering alanine 130 to proline 149 has biased composition (low complexity). The span at aspartate 164–glutamate 175 shows a compositional bias: polar residues. The DH domain occupies lysine 273–leucine 448. Disordered regions lie at residues glutamate 504 to glutamate 550 and alanine 702 to tryptophan 850. Composition is skewed to low complexity over residues proline 510–serine 520 and alanine 754–arginine 770. Arginine 766 carries the post-translational modification Omega-N-methylarginine. The span at phenylalanine 773–glutamine 783 shows a compositional bias: polar residues. The span at threonine 784–glutamate 806 shows a compositional bias: basic and acidic residues. Positions serine 826–asparagine 835 are enriched in basic residues.

The polypeptide is Rho guanine nucleotide exchange factor 33 (Arhgef33) (Mus musculus (Mouse)).